Reading from the N-terminus, the 4760-residue chain is Nonribosomal peptide synthetase cm3A (4760 aa).

Residues 1 to 12 (MKHLASSENMPT) are compositionally biased toward polar residues. Positions 1 to 24 (MKHLASSENMPTPAQDRAPSPSAM) are disordered. The region spanning 19–95 (PSPSAMQQEI…ELSRSAECQL (77 aa)) is the Carrier 1 domain. O-(pantetheine 4'-phosphoryl)serine is present on Ser-56. 2 condensation regions span residues 142–570 (QDIF…EIEQ) and 178–571 (PGLS…IEQL). Residues 591-984 (DEQARLCPDA…GRRDTQVKLR (394 aa)) form an adenylation 1 region. Positions 1120 to 1197 (REATTLQLQI…KLTEKLGVPE (78 aa)) constitute a Carrier 2 domain. Position 1158 is an O-(pantetheine 4'-phosphoryl)serine (Ser-1158). Condensation stretches follow at residues 1210–1654 (FPLS…KTPS) and 1689–2125 (VEDM…NVTT). The interval 2171 to 2551 (DGDLTYFELD…DRKDWQIKIR (381 aa)) is adenylation 2. The region spanning 2684-2762 (LPSSETEKTV…ELAHAIDQRS (79 aa)) is the Carrier 3 domain. Ser-2721 bears the O-(pantetheine 4'-phosphoryl)serine mark. A condensation 4 region spans residues 2811 to 3203 (VEDIYPCTPL…RFKHIFGQLS (393 aa)). The segment at 3255–3647 (SATTPDRPAV…GRADQQLKIR (393 aa)) is adenylation 3. In terms of domain architecture, Carrier 4 spans 3783-3857 (TRTEELMQSV…QLAQRATTDA (75 aa)). Condensation stretches follow at residues 3869-4296 (EFRL…TLLC) and 4340-4757 (EDIY…EEMG).

The protein belongs to the nrps family.

It functions in the pathway secondary metabolite biosynthesis. In terms of biological role, nonribosomal peptide synthetase; part of the gene cluster that mediates the biosynthesis of beauveriolides I and III, cyclodepsipeptides acting as inhibitors of the acyl-CoA:cholesterol acyltransferase. The HR-PKS cm3B initiates the biosynthesis of beauveriolides by iteratively catalyzing the formation of the linear polyketide chain. The ATP-dependent acetyl-CoA ligase cm3D converts the polyketide carboxylic acid to a CoA thioester which id shuttled to the first T domain in the NRPS cm3A by the acetyltransferase cm3C. Cm3A contains 13 domains and assembles the polyketide chain, L-phenylalanine, L-alanine, and D-leucine (or D-allo-isoleucine) to form beauveriolide I (or beauveriolide III). The production of both beauveriolides I and III suggests the substrate adaptability of cm3B, using different amino acids as substrates. This Cordyceps militaris (strain CM01) (Caterpillar fungus) protein is Nonribosomal peptide synthetase cm3A.